The sequence spans 502 residues: UDP-N-acetylglucosamine diphosphorylase 2 (502 aa).

The Substrate binding signature appears at 130–133 (LSGG). Substrate is bound at residue Asn-250. Positions 332-333 (EY) match the Substrate binding motif. Residue Lys-429 participates in substrate binding.

This sequence belongs to the UDPGP type 1 family. In terms of assembly, monomer. Mg(2+) is required as a cofactor. The cofactor is Mn(2+). As to expression, expressed in root tips, stipules, lateral root primordia, immature anthers and at the branching points of the flowering shoots.

The protein localises to the cytoplasm. It catalyses the reaction N-acetyl-alpha-D-glucosamine 1-phosphate + UTP + H(+) = UDP-N-acetyl-alpha-D-glucosamine + diphosphate. The enzyme catalyses N-acetyl-alpha-D-galactosamine 1-phosphate + UTP + H(+) = UDP-N-acetyl-alpha-D-galactosamine + diphosphate. The catalysed reaction is alpha-D-glucose 1-phosphate + UTP + H(+) = UDP-alpha-D-glucose + diphosphate. Its pathway is nucleotide-sugar biosynthesis; UDP-N-acetyl-alpha-D-glucosamine biosynthesis; UDP-N-acetyl-alpha-D-glucosamine from N-acetyl-alpha-D-glucosamine 1-phosphate: step 1/1. In terms of biological role, uridylyltransferase involved in the biosynthesis of UDP-glucosamine, an essential precursor for glycoprotein and glycolipid synthesis. Can use UDP-glucosamine, the 4-epimer UDP-galactosamine and UDP-glucose as substrates. Acts redundantly with GLCNAC1PUT1. Required for gametogenesis and embryo development. The protein is UDP-N-acetylglucosamine diphosphorylase 2 (GLCNAC1PUT2) of Arabidopsis thaliana (Mouse-ear cress).